Consider the following 439-residue polypeptide: Proline--tRNA ligase (439 aa).

It belongs to the class-II aminoacyl-tRNA synthetase family. ProS type 2 subfamily. Homodimer.

Its subcellular location is the cytoplasm. The enzyme catalyses tRNA(Pro) + L-proline + ATP = L-prolyl-tRNA(Pro) + AMP + diphosphate. In terms of biological role, catalyzes the attachment of proline to tRNA(Pro) in a two-step reaction: proline is first activated by ATP to form Pro-AMP and then transferred to the acceptor end of tRNA(Pro). This is Proline--tRNA ligase from Rhodopseudomonas palustris (strain BisB18).